Reading from the N-terminus, the 64-residue chain is Alpha-conotoxin CnIA (64 aa).

The signal sequence occupies residues 1–21 (MGMRMMFTVFLLVVLTTTVVS). Residues 22 to 47 (FPSDSASDGRDDEAKDERSDIYESKR) constitute a propeptide that is removed on maturation. Intrachain disulfides connect cysteine 51/cysteine 56 and cysteine 52/cysteine 62. Proline 54 carries the 4-hydroxyproline; in CnIK; partial modification. Cysteine 62 carries the cysteine amide modification.

It belongs to the conotoxin A superfamily. In terms of tissue distribution, expressed by the venom duct.

Its subcellular location is the secreted. Its function is as follows. Alpha-conotoxins act on postsynaptic membranes, they bind to the nicotinic acetylcholine receptors (nAChR) and thus inhibit them. CnIA and CnIB block muscular nAChR alpha-1/gamma and alpha-1/delta subunits. The protein is Alpha-conotoxin CnIA of Conus consors (Singed cone).